The primary structure comprises 185 residues: Homeobox expressed in ES cells 1 (185 aa).

Positions 108-167 (GRRPRTAFTQNQIEVLENVFRVNCYPGIDIREDLAQKLNLEEDRIQIWFQNRRAKLKRSH) form a DNA-binding region, homeobox.

The protein belongs to the ANF homeobox family. As to quaternary structure, can form heterodimers with PROP1 in binding to DNA. Interacts with TLE1.

The protein localises to the nucleus. Functionally, required for the normal development of the forebrain, eyes and other anterior structures such as the olfactory placodes and pituitary gland. Possible transcriptional repressor. Binds to the palindromic PIII sequence, 5'-AGCTTGAGTCTAATTGAATTAACTGTAC-3'. HESX1 and PROP1 bind as heterodimers on this palindromic site, and, in vitro, HESX1 can antagonize PROP1 activation. The polypeptide is Homeobox expressed in ES cells 1 (HESX1) (Pan paniscus (Pygmy chimpanzee)).